Consider the following 183-residue polypeptide: Gamma-crystallin N (183 aa).

Beta/gamma crystallin 'Greek key' domains follow at residues 6 to 46 (GKIT…RVES), 47 to 89 (GAWV…RPVG), 95 to 136 (FRID…KVYG), and 138 to 180 (GAWV…RRVL).

The protein belongs to the beta/gamma-crystallin family. Monomer. As to expression, primordially eye-specific. Present in lens nucleus. In the retina, expression in observed in the outer plexiform layer (containing photoreceptors axons and synapses) and photoreceptor outer segments (at protein level). Also detected in the auditory hindbrain where it is highly expressed in the medial nucleus of the trapezoid body, but also present in other nuclei of the superior olivary complex.

Its function is as follows. Crystallins are the dominant structural components of the vertebrate eye lens. Also plays an important role for integrity and function of auditory nuclei. The chain is Gamma-crystallin N from Mus musculus (Mouse).